A 158-amino-acid chain; its full sequence is Cytochrome b6-f complex subunit 4 (158 aa).

A run of 3 helical transmembrane segments spans residues 34–54 (LLYI…GLAV), 93–113 (LLGV…PFLE), and 129–149 (TVFL…TLPI).

It belongs to the cytochrome b family. PetD subfamily. In terms of assembly, the 4 large subunits of the cytochrome b6-f complex are cytochrome b6, subunit IV (17 kDa polypeptide, petD), cytochrome f and the Rieske protein, while the 4 small subunits are petG, petL, petM and petN. The complex functions as a dimer.

Its subcellular location is the plastid. The protein resides in the chloroplast thylakoid membrane. In terms of biological role, component of the cytochrome b6-f complex, which mediates electron transfer between photosystem II (PSII) and photosystem I (PSI), cyclic electron flow around PSI, and state transitions. The chain is Cytochrome b6-f complex subunit 4 from Liriodendron tulipifera (Tuliptree).